The following is a 622-amino-acid chain: Membrane protein insertase YidC (622 aa).

A helical membrane pass occupies residues 6–26; the sequence is FIAVVLSVLVLVGASFLQELL. The interval 37 to 71 is disordered; that stretch reads AEHTLSAVPEETRTQSAHGGAADTQETTQPAAHPS. 4 consecutive transmembrane segments (helical) span residues 413-433, 483-503, 513-533, and 579-599; these read LIPN…VLFF, LSGC…YRLF, MFIP…TLPF, and VMPL…LVYW.

This sequence belongs to the OXA1/ALB3/YidC family. Type 1 subfamily. In terms of assembly, interacts with the Sec translocase complex via SecD. Specifically interacts with transmembrane segments of nascent integral membrane proteins during membrane integration.

It localises to the cell inner membrane. Required for the insertion and/or proper folding and/or complex formation of integral membrane proteins into the membrane. Involved in integration of membrane proteins that insert both dependently and independently of the Sec translocase complex, as well as at least some lipoproteins. Aids folding of multispanning membrane proteins. The polypeptide is Membrane protein insertase YidC (Treponema pallidum (strain Nichols)).